We begin with the raw amino-acid sequence, 95 residues long: Large ribosomal subunit protein uL23 (95 aa).

It belongs to the universal ribosomal protein uL23 family. As to quaternary structure, part of the 50S ribosomal subunit. Contacts protein L29, and trigger factor when it is bound to the ribosome.

One of the early assembly proteins it binds 23S rRNA. One of the proteins that surrounds the polypeptide exit tunnel on the outside of the ribosome. Forms the main docking site for trigger factor binding to the ribosome. The chain is Large ribosomal subunit protein uL23 from Leuconostoc mesenteroides subsp. mesenteroides (strain ATCC 8293 / DSM 20343 / BCRC 11652 / CCM 1803 / JCM 6124 / NCDO 523 / NBRC 100496 / NCIMB 8023 / NCTC 12954 / NRRL B-1118 / 37Y).